Reading from the N-terminus, the 293-residue chain is Bifunctional monothiol glutaredoxin-S16, chloroplastic (293 aa).

The N-terminal 62 residues, 1 to 62 (MAAITISSSL…APSRRRSFFI (62 aa)), are a transit peptide targeting the chloroplast. C123 and C219 are oxidised to a cystine. One can recognise a Glutaredoxin domain in the interval 194–293 (EELIDRLVKE…ENGELANILN (100 aa)). Glutathione is bound at residue K211. C219 serves as a coordination point for [2Fe-2S] cluster. Glutathione contacts are provided by residues R251, F263, and 276 to 277 (CD).

The protein belongs to the glutaredoxin family. CGFS subfamily. As to quaternary structure, [2Fe-2S]-bridged holo-homodimer. Interacts in vitro with SUFE1, BOLA1, BOLA2 and BOLA4. Interacts in vivo only with SUFE1, BOLA1 and BOLA4. Interacts with SBP1.

Its subcellular location is the plastid. The protein localises to the chloroplast. The formation of an intramolecular disulfide bond negatively regulates both the N-terminal endonuclease and the C-terminal glutaredoxin activities. Functionally, may only reduce GSH-thiol disulfides, but not protein disulfides. Participates probably to the maturation of iron-sulfur proteins and to the regulation of the redox state of the BOLA proteins. The GRXS16-BOLA1 heterodimer binds a labile, oxygen sensitive iron-sulfur cluster. Able to cleave linearized DNA in vitro. In Arabidopsis thaliana (Mouse-ear cress), this protein is Bifunctional monothiol glutaredoxin-S16, chloroplastic.